A 925-amino-acid chain; its full sequence is Probable dipeptidyl-aminopeptidase B (925 aa).

Positions 1–104 (MTPYRDVPPV…RHAQKKGPGM (104 aa)) are disordered. Residues 1-110 (MTPYRDVPPV…GPGMDRGMRR (110 aa)) lie on the Cytoplasmic side of the membrane. Residues 31–40 (ESGSSVSTTS) show a composition bias toward low complexity. Residues 55-72 (LSEKQPRGDDNEDALKDE) are compositionally biased toward basic and acidic residues. A helical; Signal-anchor for type II membrane protein transmembrane segment spans residues 111–131 (ALLIAAGLLVSAWVAGLFVYI). At 132–925 (ATKSYKPASA…PKPNGKRRAA (794 aa)) the chain is on the vacuolar side. An N-linked (GlcNAc...) asparagine glycan is attached at Asn-369. Residue Ser-773 is the Charge relay system of the active site. N-linked (GlcNAc...) asparagine glycosylation is present at Asn-832. Residues Asp-850 and His-883 each act as charge relay system in the active site.

It belongs to the peptidase S9B family.

Its subcellular location is the vacuole membrane. The enzyme catalyses Release of an N-terminal dipeptide, Xaa-Yaa-|-Zaa-, from a polypeptide, preferentially when Yaa is Pro, provided Zaa is neither Pro nor hydroxyproline.. Functionally, type IV dipeptidyl-peptidase which removes N-terminal dipeptides sequentially from polypeptides having unsubstituted N-termini provided that the penultimate residue is proline. The chain is Probable dipeptidyl-aminopeptidase B (DAPB) from Chaetomium globosum (strain ATCC 6205 / CBS 148.51 / DSM 1962 / NBRC 6347 / NRRL 1970) (Soil fungus).